The primary structure comprises 89 residues: Protein S100-A6 (89 aa).

2 EF-hand domains span residues 12–47 (LVAIFHKYSGKEGDKHTLSKKELKELIQKELTIGSK) and 48–83 (LQDAEIARLMDDLDRNKDQEVNFQEYVAFLGALALI). T28 and E33 together coordinate Ca(2+). Residue K40 is modified to N6-acetyllysine. Position 46 is a phosphoserine (S46). K47 is modified (N6-acetyllysine; alternate). K47 bears the N6-succinyllysine; alternate mark. 5 residues coordinate Ca(2+): D61, N63, D65, E67, and E72.

This sequence belongs to the S-100 family. Homodimer; head to tail assembly of 2 subunits. Interacts with CACYBP in a calcium-dependent manner. Interacts with ANXA2 and ANXA11 (via N-terminus). Interacts with SUGT1. Interacts with TP53; has higher affinity for TP53 that is phosphorylated on its N-terminal domain, and lower affinity for TP53 that is phosphorylated on its C-terminal domain. Interacts with tropomyosin. Interacts with FKBP4. Interacts with PPP5C (via TPR repeats); the interaction is calcium-dependent and modulates PPP5C activity. Interacts with TPPP; this interaction inhibits TPPP dimerization.

It is found in the nucleus envelope. Its subcellular location is the cytoplasm. The protein localises to the cell membrane. Functionally, may function as calcium sensor and modulator, contributing to cellular calcium signaling. May function by interacting with other proteins, such as TPR-containing proteins, and indirectly play a role in many physiological processes such as the reorganization of the actin cytoskeleton and in cell motility. Binds 2 calcium ions. Calcium binding is cooperative. The protein is Protein S100-A6 (S100a6) of Mus musculus (Mouse).